A 153-amino-acid polypeptide reads, in one-letter code: Endoribonuclease YbeY (153 aa).

Positions 118, 122, and 128 each coordinate Zn(2+).

Belongs to the endoribonuclease YbeY family. Zn(2+) is required as a cofactor.

The protein localises to the cytoplasm. Single strand-specific metallo-endoribonuclease involved in late-stage 70S ribosome quality control and in maturation of the 3' terminus of the 16S rRNA. This chain is Endoribonuclease YbeY, found in Staphylococcus haemolyticus (strain JCSC1435).